The primary structure comprises 288 residues: MKRTPHLLAIQSHVVFGHAGNSAAVFPMQRIGVNVWPLNTVQFSNHTQYKQWTGEVLAPQQIPALIDGIAAIGELGNCDAVLSGYLGSAAQGRAILSGVARIKAANPKALYLCDPVMGHPEKGCIVPPQVSDFLLEEAAAVADFMCPNQLELDSFSGRKPESLPDCLAMARALLARGPKAIVVKHLDYPGKAADGFEMLLVTAEASWHLRRPLLAFPRQPVGVGDLTSGLFLSRILLGDDLVAAFEFTAAAVHEVLLETQACGSYELELVRAQDRIAHPRVKFEAVRL.

Residues serine 12 and threonine 47–glutamine 48 each bind substrate. Residues aspartate 114, glutamate 151, lysine 184, and arginine 211–leucine 214 each bind ATP. Aspartate 225 lines the substrate pocket.

The protein belongs to the pyridoxine kinase family. PdxY subfamily. In terms of assembly, homodimer. The cofactor is Mg(2+).

It catalyses the reaction pyridoxal + ATP = pyridoxal 5'-phosphate + ADP + H(+). Its pathway is cofactor metabolism; pyridoxal 5'-phosphate salvage; pyridoxal 5'-phosphate from pyridoxal: step 1/1. In terms of biological role, pyridoxal kinase involved in the salvage pathway of pyridoxal 5'-phosphate (PLP). Catalyzes the phosphorylation of pyridoxal to PLP. This is Pyridoxal kinase PdxY from Pseudomonas syringae pv. tomato (strain ATCC BAA-871 / DC3000).